The chain runs to 428 residues: Kynureninase (428 aa).

Pyridoxal 5'-phosphate contacts are provided by residues Thr104, Thr105, Phe132–Asp135, Asp213, His216, and Tyr238. Lys239 bears the N6-(pyridoxal phosphate)lysine mark. Pyridoxal 5'-phosphate contacts are provided by Trp267 and Thr295.

The protein belongs to the kynureninase family. In terms of assembly, homodimer. It depends on pyridoxal 5'-phosphate as a cofactor.

It carries out the reaction L-kynurenine + H2O = anthranilate + L-alanine + H(+). The enzyme catalyses 3-hydroxy-L-kynurenine + H2O = 3-hydroxyanthranilate + L-alanine + H(+). It functions in the pathway amino-acid degradation; L-kynurenine degradation; L-alanine and anthranilate from L-kynurenine: step 1/1. The protein operates within cofactor biosynthesis; NAD(+) biosynthesis; quinolinate from L-kynurenine: step 2/3. Its function is as follows. Catalyzes the cleavage of L-kynurenine (L-Kyn) and L-3-hydroxykynurenine (L-3OHKyn) into anthranilic acid (AA) and 3-hydroxyanthranilic acid (3-OHAA), respectively. The sequence is that of Kynureninase from Bacillus mycoides (strain KBAB4) (Bacillus weihenstephanensis).